The following is a 330-amino-acid chain: PDZ and LIM domain protein 4 (330 aa).

In terms of domain architecture, PDZ spans 1–84 (MTHSVTLRGP…HLTLSVSRPE (84 aa)). 2 disordered regions span residues 104–153 (DPES…SNEA) and 219–242 (EAGE…ASKL). Phosphoserine is present on residues Ser107, Ser111, Ser115, Ser118, Ser119, Ser124, and Ser134. Residues 108 to 122 (QDCSPATSRRSSVSG) are compositionally biased toward polar residues. The LIM zinc-binding domain maps to 255–305 (CTRCGHGIVGTIVKARDKLYHPECFMCSDCGLNLKQRGYFFLDERLYCENH).

As to quaternary structure, homodimer. Interacts (via C-terminus only or via combined C-terminus and LIM domain, but not LIM domain only) with PTPN13 (via the second or fourth PDZ domains). Found in a complex with PTPN13 and TRIP6. Interacts (via PDZ domain) with ACTN1 and ACTN2 (via C-terminal SDL residues). Interacts (via PDZ domain) with TRIP6 (via the second LIM domain or via the third LIM domain plus C-terminus). Interacts (via LIM domain) with GRIA1 (via C-terminus); this interaction as well as the interaction with alpha-actinin is required for their colocalization in early endosomes. Interacts with PDLIM1. Forms (via LIM domain) a heterodimer with PDLIM3. Interacts directly with SRC (via kinase domain and to a lesser extent the SH2 domain). Post-translationally, phosphorylated on tyrosine residue(s). Can be dephosphorylated by PTPN13. In terms of tissue distribution, expressed in several non-muscle tissues including lung, brain, ovary and uterus, and especially in epithelial cells at 14 dpc. In the uterus, high expression in the glandular epithelium, but absent in the simple columnar epithelium lining the uterus cavity.

It localises to the cytoplasm. The protein localises to the cytoskeleton. Its subcellular location is the cell projection. It is found in the dendritic spine. The protein resides in the early endosome membrane. It localises to the recycling endosome membrane. The protein localises to the nucleus. Its subcellular location is the perinuclear region. It is found in the lamellipodium. The protein resides in the synapse. It localises to the synaptosome. In terms of biological role, suppresses SRC activation by recognizing and binding to active SRC and facilitating PTPN13-mediated dephosphorylation of SRC 'Tyr-419' leading to its inactivation. Inactivated SRC dissociates from this protein allowing the initiation of a new SRC inactivation cycle. Involved in reorganization of the actin cytoskeleton. In nonmuscle cells, binds to ACTN1 (alpha-actinin-1), increases the affinity of ACTN1 to F-actin (filamentous actin), and promotes formation of actin stress fibers. Involved in regulation of the synaptic AMPA receptor transport in dendritic spines of hippocampal pyramidal neurons directing the receptors toward an insertion at the postsynaptic membrane. Links endosomal surface-internalized GRIA1-containing AMPA receptors to the alpha-actinin/actin cytoskeleton. Increases AMPA receptor-mediated excitatory postsynaptic currents in neurons. The polypeptide is PDZ and LIM domain protein 4 (Pdlim4) (Mus musculus (Mouse)).